The primary structure comprises 172 residues: C-phycocyanin-2 beta subunit (172 aa).

At Asn72 the chain carries N4-methylasparagine. The (2R,3E)-phycocyanobilin site is built by Cys82 and Cys153.

Belongs to the phycobiliprotein family. In terms of assembly, heterodimer of an alpha and a beta subunit, which further assembles into trimers and the trimers into hexamers. Contains two covalently linked bilin chromophores.

The protein localises to the cellular thylakoid membrane. In terms of biological role, light-harvesting photosynthetic bile pigment-protein from the phycobiliprotein complex (phycobilisome, PBS). Phycocyanin is the major phycobiliprotein in the PBS rod. The sequence is that of C-phycocyanin-2 beta subunit (cpcB2) from Microchaete diplosiphon (Fremyella diplosiphon).